A 40-amino-acid chain; its full sequence is Photosystem II reaction center protein J (40 aa).

The helical transmembrane segment at 8–28 threads the bilayer; the sequence is IPLWIIGTVTGIPVIGLIGIF.

Belongs to the PsbJ family. PSII is composed of 1 copy each of membrane proteins PsbA, PsbB, PsbC, PsbD, PsbE, PsbF, PsbH, PsbI, PsbJ, PsbK, PsbL, PsbM, PsbT, PsbX, PsbY, PsbZ, Psb30/Ycf12, at least 3 peripheral proteins of the oxygen-evolving complex and a large number of cofactors. It forms dimeric complexes.

Its subcellular location is the plastid. It localises to the chloroplast thylakoid membrane. Its function is as follows. One of the components of the core complex of photosystem II (PSII). PSII is a light-driven water:plastoquinone oxidoreductase that uses light energy to abstract electrons from H(2)O, generating O(2) and a proton gradient subsequently used for ATP formation. It consists of a core antenna complex that captures photons, and an electron transfer chain that converts photonic excitation into a charge separation. This is Photosystem II reaction center protein J from Citrus sinensis (Sweet orange).